The primary structure comprises 441 residues: Methylenetetrahydrofolate--tRNA-(uracil-5-)-methyltransferase TrmFO (441 aa).

11 to 16 (GAGLAG) contacts FAD.

The protein belongs to the MnmG family. TrmFO subfamily. It depends on FAD as a cofactor.

It localises to the cytoplasm. The catalysed reaction is uridine(54) in tRNA + (6R)-5,10-methylene-5,6,7,8-tetrahydrofolate + NADH + H(+) = 5-methyluridine(54) in tRNA + (6S)-5,6,7,8-tetrahydrofolate + NAD(+). It catalyses the reaction uridine(54) in tRNA + (6R)-5,10-methylene-5,6,7,8-tetrahydrofolate + NADPH + H(+) = 5-methyluridine(54) in tRNA + (6S)-5,6,7,8-tetrahydrofolate + NADP(+). Its function is as follows. Catalyzes the folate-dependent formation of 5-methyl-uridine at position 54 (M-5-U54) in all tRNAs. The chain is Methylenetetrahydrofolate--tRNA-(uracil-5-)-methyltransferase TrmFO from Lactiplantibacillus plantarum (strain ATCC BAA-793 / NCIMB 8826 / WCFS1) (Lactobacillus plantarum).